A 516-amino-acid polypeptide reads, in one-letter code: Probable 2-methylcitrate dehydratase (516 aa).

It belongs to the PrpD family.

The catalysed reaction is (2S,3S)-2-methylcitrate = 2-methyl-cis-aconitate + H2O. Its pathway is organic acid metabolism; propanoate degradation. Functionally, catalyzes the stereospecific dehydration of (2S,3S)-2-methylcitrate (2-MC) to yield the cis isomer of 2-methyl-aconitate. This is Probable 2-methylcitrate dehydratase (PDH1) from Saccharomyces cerevisiae (strain ATCC 204508 / S288c) (Baker's yeast).